The chain runs to 279 residues: Protease HtpX homolog (279 aa).

The next 2 membrane-spanning stretches (helical) occupy residues Thr6 to Gly26 and Gly28 to Ser48. Zn(2+) is bound at residue His127. The active site involves Glu128. Residue His131 coordinates Zn(2+). 2 consecutive transmembrane segments (helical) span residues Ile137–Ala157 and Leu177–Ile197. Glu202 is a binding site for Zn(2+).

It belongs to the peptidase M48B family. Zn(2+) is required as a cofactor.

Its subcellular location is the cell inner membrane. In Syntrophotalea carbinolica (strain DSM 2380 / NBRC 103641 / GraBd1) (Pelobacter carbinolicus), this protein is Protease HtpX homolog.